We begin with the raw amino-acid sequence, 464 residues long: Mothers against decapentaplegic homolog 5 (464 aa).

An MH1 domain is found at 13–137 (PAVKRLLGWK…YKRVESPVLP (125 aa)). The Zn(2+) site is built by cysteine 65, cysteine 110, cysteine 122, and histidine 127. The disordered stretch occupies residues 166–258 (HMPLNATFPE…LAPQNMPRGD (93 aa)). A compositionally biased stretch (polar residues) spans 173–183 (FPESFQQHSGG). The span at 199 to 216 (ASSGTYPNSPASSGPSSP) shows a compositional bias: low complexity. Residues 237-251 (QDGSQSMETGSSLAP) are compositionally biased toward polar residues. Positions 270-464 (WCSIVYYELN…SPLNPISSVS (195 aa)) constitute an MH2 domain.

It belongs to the dwarfin/SMAD family. In terms of assembly, may form trimers with the co-SMAD SMAD4.

It localises to the cytoplasm. Its subcellular location is the nucleus. In terms of biological role, involved in ventralization. May mediate Bmp2b signaling during early phases of embryonic dorsal-ventral pattern formation. Required for initiation of Smad1 expression during gastrulation. The sequence is that of Mothers against decapentaplegic homolog 5 (smad5) from Danio rerio (Zebrafish).